We begin with the raw amino-acid sequence, 149 residues long: Large ribosomal subunit protein uL13 (149 aa).

Belongs to the universal ribosomal protein uL13 family. In terms of assembly, part of the 50S ribosomal subunit.

Functionally, this protein is one of the early assembly proteins of the 50S ribosomal subunit, although it is not seen to bind rRNA by itself. It is important during the early stages of 50S assembly. The polypeptide is Large ribosomal subunit protein uL13 (Chlorobium phaeovibrioides (strain DSM 265 / 1930) (Prosthecochloris vibrioformis (strain DSM 265))).